Consider the following 75-residue polypeptide: UPF0154 protein MMOB4450 (75 aa).

The helical transmembrane segment at Ile7 to Phe27 threads the bilayer.

It belongs to the UPF0154 family.

The protein localises to the cell membrane. This is UPF0154 protein MMOB4450 from Mycoplasma mobile (strain ATCC 43663 / 163K / NCTC 11711) (Mesomycoplasma mobile).